A 194-amino-acid polypeptide reads, in one-letter code: Der GTPase-activating protein YihI (194 aa).

The tract at residues 1–81 (MSRSKKTRRI…AKVKKDPRVG (81 aa)) is disordered. Basic and acidic residues-rich tracts occupy residues 9-23 (RISD…DKKP) and 36-47 (TRYELDVQAREE). Residues 59–70 (GSRNVITEQKTA) show a composition bias toward polar residues.

Belongs to the YihI family. Interacts with Der.

In terms of biological role, a GTPase-activating protein (GAP) that modifies Der/EngA GTPase function. May play a role in ribosome biogenesis. In Haemophilus ducreyi (strain 35000HP / ATCC 700724), this protein is Der GTPase-activating protein YihI.